The chain runs to 345 residues: UDP-N-acetylenolpyruvoylglucosamine reductase (345 aa).

In terms of domain architecture, FAD-binding PCMH-type spans 16–185 (VNAFAKSVVT…VSVGLRLCKK (170 aa)). The active site involves R162. The active-site Proton donor is S231. E328 is a catalytic residue.

The protein belongs to the MurB family. It depends on FAD as a cofactor.

The protein resides in the cytoplasm. It catalyses the reaction UDP-N-acetyl-alpha-D-muramate + NADP(+) = UDP-N-acetyl-3-O-(1-carboxyvinyl)-alpha-D-glucosamine + NADPH + H(+). The protein operates within cell wall biogenesis; peptidoglycan biosynthesis. In terms of biological role, cell wall formation. The polypeptide is UDP-N-acetylenolpyruvoylglucosamine reductase (Blochmanniella pennsylvanica (strain BPEN)).